A 435-amino-acid chain; its full sequence is Serine--tRNA ligase (435 aa).

239–241 (TAE) is a binding site for L-serine. ATP is bound at residue 270 to 272 (RAE). Glutamate 293 contributes to the L-serine binding site. 357-360 (EISS) lines the ATP pocket. An L-serine-binding site is contributed by serine 393.

It belongs to the class-II aminoacyl-tRNA synthetase family. Type-1 seryl-tRNA synthetase subfamily. In terms of assembly, homodimer. The tRNA molecule binds across the dimer.

The protein resides in the cytoplasm. It catalyses the reaction tRNA(Ser) + L-serine + ATP = L-seryl-tRNA(Ser) + AMP + diphosphate + H(+). The enzyme catalyses tRNA(Sec) + L-serine + ATP = L-seryl-tRNA(Sec) + AMP + diphosphate + H(+). It participates in aminoacyl-tRNA biosynthesis; selenocysteinyl-tRNA(Sec) biosynthesis; L-seryl-tRNA(Sec) from L-serine and tRNA(Sec): step 1/1. Catalyzes the attachment of serine to tRNA(Ser). Is also able to aminoacylate tRNA(Sec) with serine, to form the misacylated tRNA L-seryl-tRNA(Sec), which will be further converted into selenocysteinyl-tRNA(Sec). This chain is Serine--tRNA ligase, found in Parvibaculum lavamentivorans (strain DS-1 / DSM 13023 / NCIMB 13966).